Consider the following 103-residue polypeptide: MKVVVMGDSDTVTGFRLAGVHEAYEFDFSELSIERARNKLKELVERDDVGIILITERLAQRIGDLPQVNLPIILQIPDKFGSIYGEELLREIVRKAVGIEIKR.

Belongs to the V-ATPase F subunit family. In terms of assembly, has multiple subunits with at least A(3), B(3), C, D, E, F, H, I and proteolipid K(x).

The protein resides in the cell membrane. Component of the A-type ATP synthase that produces ATP from ADP in the presence of a proton gradient across the membrane. This chain is A-type ATP synthase subunit F, found in Pyrococcus abyssi (strain GE5 / Orsay).